Here is a 152-residue protein sequence, read N- to C-terminus: Large ribosomal subunit protein bL9 (152 aa).

Belongs to the bacterial ribosomal protein bL9 family.

Functionally, binds to the 23S rRNA. This Synechococcus elongatus (strain ATCC 33912 / PCC 7942 / FACHB-805) (Anacystis nidulans R2) protein is Large ribosomal subunit protein bL9.